We begin with the raw amino-acid sequence, 231 residues long: Ureidoacrylate amidohydrolase RutB (231 aa).

Asp25 functions as the Proton acceptor in the catalytic mechanism. Lys134 is a catalytic residue. Cys167 serves as the catalytic Nucleophile.

The protein belongs to the isochorismatase family. RutB subfamily.

It carries out the reaction (Z)-3-ureidoacrylate + H2O + H(+) = (Z)-3-aminoacrylate + NH4(+) + CO2. The enzyme catalyses (Z)-3-ureidoacrylate + H2O = (Z)-3-aminoacrylate + carbamate + H(+). The catalysed reaction is (Z)-2-methylureidoacrylate + H2O + H(+) = (Z)-2-methylaminoacrylate + NH4(+) + CO2. In terms of biological role, hydrolyzes ureidoacrylate to form aminoacrylate and carbamate. The carbamate hydrolyzes spontaneously, thereby releasing one of the nitrogen atoms of the pyrimidine ring as ammonia and one of its carbon atoms as CO2. The protein is Ureidoacrylate amidohydrolase RutB of Escherichia coli O157:H7 (strain EC4115 / EHEC).